The following is a 738-amino-acid chain: Translation initiation factor IF-2 (738 aa).

Over residues 1-10 (MNSMRISGHQ) the composition is skewed to polar residues. A disordered region spans residues 1–150 (MNSMRISGHQ…PTTVRAPVRP (150 aa)). Positions 22–102 (AGGGRGPGNP…GGRGPSGGRG (81 aa)) are enriched in gly residues. Basic and acidic residues predominate over residues 103 to 120 (GDGRRREESPTDHEDGRI). Over residues 121–143 (NRSGRSTSTTTTRTSSTLARPTT) the composition is skewed to low complexity. The region spanning 238–405 (PRPPVVTIMG…MILLVADLNE (168 aa)) is the tr-type G domain. The segment at 247–254 (GHVDHGKT) is G1. 247–254 (GHVDHGKT) lines the GTP pocket. The G2 stretch occupies residues 272–276 (GITQH). The interval 293-296 (DTPG) is G3. GTP contacts are provided by residues 293–297 (DTPGH) and 347–350 (NKID). Residues 347 to 350 (NKID) form a G4 region. The interval 383–385 (SAK) is G5.

This sequence belongs to the TRAFAC class translation factor GTPase superfamily. Classic translation factor GTPase family. IF-2 subfamily.

It localises to the cytoplasm. Its function is as follows. One of the essential components for the initiation of protein synthesis. Protects formylmethionyl-tRNA from spontaneous hydrolysis and promotes its binding to the 30S ribosomal subunits. Also involved in the hydrolysis of GTP during the formation of the 70S ribosomal complex. The sequence is that of Translation initiation factor IF-2 from Roseiflexus castenholzii (strain DSM 13941 / HLO8).